The chain runs to 290 residues: Elongation factor Ts, mitochondrial 1 (290 aa).

The protein belongs to the EF-Ts family.

Its subcellular location is the mitochondrion. In terms of biological role, associates with the EF-Tu.GDP complex and induces the exchange of GDP to GTP. It remains bound to the aminoacyl-tRNA.EF-Tu.GTP complex up to the GTP hydrolysis stage on the ribosome. This chain is Elongation factor Ts, mitochondrial 1, found in Postia placenta (strain ATCC 44394 / Madison 698-R) (Brown rot fungus).